Reading from the N-terminus, the 337-residue chain is Glycerol-3-phosphate dehydrogenase [NAD(P)+] (337 aa).

3 residues coordinate NADPH: S12, W13, and K110. Sn-glycerol 3-phosphate-binding residues include K110, G141, and S143. A145 is a binding site for NADPH. Positions 196, 249, 259, 260, and 261 each coordinate sn-glycerol 3-phosphate. K196 serves as the catalytic Proton acceptor. Position 260 (R260) interacts with NADPH. V284 and E286 together coordinate NADPH.

The protein belongs to the NAD-dependent glycerol-3-phosphate dehydrogenase family.

Its subcellular location is the cytoplasm. The enzyme catalyses sn-glycerol 3-phosphate + NAD(+) = dihydroxyacetone phosphate + NADH + H(+). The catalysed reaction is sn-glycerol 3-phosphate + NADP(+) = dihydroxyacetone phosphate + NADPH + H(+). It participates in membrane lipid metabolism; glycerophospholipid metabolism. Catalyzes the reduction of the glycolytic intermediate dihydroxyacetone phosphate (DHAP) to sn-glycerol 3-phosphate (G3P), the key precursor for phospholipid synthesis. The chain is Glycerol-3-phosphate dehydrogenase [NAD(P)+] from Levilactobacillus brevis (strain ATCC 367 / BCRC 12310 / CIP 105137 / JCM 1170 / LMG 11437 / NCIMB 947 / NCTC 947) (Lactobacillus brevis).